Consider the following 492-residue polypeptide: Cobyric acid synthase (492 aa).

A GATase cobBQ-type domain is found at 253–441 (VLKVIAPVYP…LHGLFDTPQA (189 aa)). The active-site Nucleophile is the C334. H433 is an active-site residue.

It belongs to the CobB/CobQ family. CobQ subfamily.

Its pathway is cofactor biosynthesis; adenosylcobalamin biosynthesis. Functionally, catalyzes amidations at positions B, D, E, and G on adenosylcobyrinic A,C-diamide. NH(2) groups are provided by glutamine, and one molecule of ATP is hydrogenolyzed for each amidation. In Azoarcus sp. (strain BH72), this protein is Cobyric acid synthase.